The primary structure comprises 282 residues: Formamidopyrimidine-DNA glycosylase (282 aa).

Proline 2 serves as the catalytic Schiff-base intermediate with DNA. The active-site Proton donor is glutamate 3. The Proton donor; for beta-elimination activity role is filled by lysine 60. DNA-binding residues include histidine 99, arginine 118, and lysine 163. An FPG-type zinc finger spans residues leucine 248–lysine 282. Arginine 272 functions as the Proton donor; for delta-elimination activity in the catalytic mechanism.

The protein belongs to the FPG family. In terms of assembly, monomer. It depends on Zn(2+) as a cofactor.

The enzyme catalyses Hydrolysis of DNA containing ring-opened 7-methylguanine residues, releasing 2,6-diamino-4-hydroxy-5-(N-methyl)formamidopyrimidine.. It catalyses the reaction 2'-deoxyribonucleotide-(2'-deoxyribose 5'-phosphate)-2'-deoxyribonucleotide-DNA = a 3'-end 2'-deoxyribonucleotide-(2,3-dehydro-2,3-deoxyribose 5'-phosphate)-DNA + a 5'-end 5'-phospho-2'-deoxyribonucleoside-DNA + H(+). Functionally, involved in base excision repair of DNA damaged by oxidation or by mutagenic agents. Acts as a DNA glycosylase that recognizes and removes damaged bases. Has a preference for oxidized purines, such as 7,8-dihydro-8-oxoguanine (8-oxoG). Has AP (apurinic/apyrimidinic) lyase activity and introduces nicks in the DNA strand. Cleaves the DNA backbone by beta-delta elimination to generate a single-strand break at the site of the removed base with both 3'- and 5'-phosphates. This is Formamidopyrimidine-DNA glycosylase from Prochlorococcus marinus (strain NATL1A).